The primary structure comprises 210 residues: Calcineurin B-like protein 4 (210 aa).

Gly2 carries N-myristoyl glycine lipidation. EF-hand domains lie at 31 to 66, 67 to 102, 104 to 139, and 148 to 183; these read EVEA…RNSR, KANL…FHPK, PKSE…LLDE, and AVEA…NPAS. Positions 161, 163, 165, 167, and 172 each coordinate Ca(2+).

The protein belongs to the calcineurin regulatory subunit family. As to quaternary structure, homodimer. Interacts with CIPK24. Expressed in leaves.

It is found in the cell membrane. Functionally, acts as a calcium sensor involved in the regulatory pathway for the control of intracellular Na(+) and K(+) homeostasis and salt tolerance. Operates in synergy with CIPK24 to activate the plasma membrane Na(+)/H(+) antiporter SOS1. May function as positive regulator of salt stress responses. CBL proteins interact with CIPK serine-threonine protein kinases. Binding of a CBL protein to the regulatory NAF domain of a CIPK protein lead to the activation of the kinase in a calcium-dependent manner. In Oryza sativa subsp. japonica (Rice), this protein is Calcineurin B-like protein 4 (CBL4).